Reading from the N-terminus, the 445-residue chain is MKPVIALVGRPNVGKSTLFNRLTKTRDAIVADFAGLTRDRHYGNGKLGPHEYIVIDTGGFEPDAVTGIYKEMARQTRQAVAESDVVIFVVDARAGISAQDYDIANYLRKLGKPTVLAANKAEGLPEGTQVSEFFELGLGEMLAVSASHGQGMRMLVDLALAPLNLPDPAEETEQEDPAVIKLAVAGRPNVGKSTLINTWLGEERLVAFDLPGTTRDAISVPFEHAGQKFELIDTAGLRRKGKVFEAIEKFSVVKTLQAIENANVVLLLLDATQGVTDQDAHIAGYILESGRAVVLAVNKWDAVDAYQRELLQRSIETRLGFLKFASIHHISAIKRQGLGPVWKSIIQAHASANRKMSTPVLTRLLMEAVQFQQPQRSGVFRPKLRYAHQGGMNPPIVIIHGNSLDHVTESYKRYLEGRIRKEFDLVGTPLRIQLKSSVNPFKDKE.

EngA-type G domains are found at residues 3–167 and 180–353; these read PVIA…NLPD and IKLA…ASAN. Residues 9–16, 56–60, 119–122, 186–193, 233–237, and 298–301 contribute to the GTP site; these read GRPNVGKS, DTGGF, NKAE, DTAGL, and NKWD. A KH-like domain is found at 354 to 438; that stretch reads RKMSTPVLTR…PLRIQLKSSV (85 aa).

This sequence belongs to the TRAFAC class TrmE-Era-EngA-EngB-Septin-like GTPase superfamily. EngA (Der) GTPase family. Associates with the 50S ribosomal subunit.

Its function is as follows. GTPase that plays an essential role in the late steps of ribosome biogenesis. The sequence is that of GTPase Der from Polaromonas naphthalenivorans (strain CJ2).